The following is a 366-amino-acid chain: Ribosomal RNA large subunit methyltransferase M (366 aa).

Residues serine 188, 221–224, aspartate 240, aspartate 260, and aspartate 277 each bind S-adenosyl-L-methionine; that span reads CPGG. The active-site Proton acceptor is lysine 306.

Belongs to the class I-like SAM-binding methyltransferase superfamily. RNA methyltransferase RlmE family. RlmM subfamily. Monomer.

The protein resides in the cytoplasm. The catalysed reaction is cytidine(2498) in 23S rRNA + S-adenosyl-L-methionine = 2'-O-methylcytidine(2498) in 23S rRNA + S-adenosyl-L-homocysteine + H(+). Catalyzes the 2'-O-methylation at nucleotide C2498 in 23S rRNA. The protein is Ribosomal RNA large subunit methyltransferase M of Salmonella newport (strain SL254).